Consider the following 231-residue polypeptide: Probable septum site-determining protein MinC (231 aa).

The disordered stretch occupies residues 102-125 (KEKAPRPAPAPQAPAQNTTPVTKT).

It belongs to the MinC family. Interacts with MinD and FtsZ.

Cell division inhibitor that blocks the formation of polar Z ring septums. Rapidly oscillates between the poles of the cell to destabilize FtsZ filaments that have formed before they mature into polar Z rings. Prevents FtsZ polymerization. The protein is Probable septum site-determining protein MinC of Escherichia coli O139:H28 (strain E24377A / ETEC).